Here is a 472-residue protein sequence, read N- to C-terminus: H(+)/Cl(-) exchange transporter ClcA (472 aa).

Residues 1–32 (MKAETPSFEAHQFVRVRRGDAVRRLIQRDKTP) are Cytoplasmic-facing. The helical transmembrane segment at 33-69 (LAVLLMAAVVGTLAGLVGVAFEKSVNWVQNQRIGALA) threads the bilayer. Residues 70-76 (QVADHWY) are Periplasmic-facing. The helical transmembrane segment at 77–100 (LVWPLAFILSALLAMVGYFLVRRF) threads the bilayer. The Selectivity filter part_1 motif lies at 106–110 (GSGIP). Serine 107 contributes to the chloride binding site. An intramembrane region (helical) is located at residues 109-116 (IPEIEGAL). Residues 117–123 (EELRPVR) lie on the Cytoplasmic side of the membrane. The next 2 membrane-spanning stretches (helical) occupy residues 124–141 (WWRVLPVKFIGGMGTLGA) and 148–166 (EGPMVQLGGNIGRMVLDIF). The Selectivity filter part_2 motif lies at 146 to 150 (GREGP). Residues 167 to 176 (RMRSPEARHT) lie on the Cytoplasmic side of the membrane. 2 consecutive intramembrane regions (helical) follow at residues 177-189 (LLATGAASGLSAA) and 193-201 (PLAGILFII). At 202–214 (EEMRPQFRYNLIS) the chain is on the cytoplasmic side. The helical transmembrane segment at 215–232 (IKAVFTGVIMSSIVFRIF) threads the bilayer. At 233–252 (NGEAAIIEVGKLSNAPVNTL) the chain is on the periplasmic side. The helical transmembrane segment at 253-281 (WLYLVLGMLFGCFGPLFNFLVLRTQDIFQ) threads the bilayer. At 282-287 (RIHGGN) the chain is on the cytoplasmic side. The chain crosses the membrane as a helical span at residues 288 to 309 (IKTWVLMGGVIGGICGLLGLMQ). Residues 310–329 (PSAVGGGFNLIPIAAAGNFS) are Periplasmic-facing. The next 2 helical transmembrane spans lie at 330–349 (VGLLLFIFIARVVTTLICFS) and 355–376 (GIFAPMLALGTLLGTAFGMAAI). Positions 355–359 (GIFAP) match the Selectivity filter part_3 motif. 2 residues coordinate chloride: isoleucine 356 and phenylalanine 357. Topologically, residues 377-386 (PLFPAYHLDA) are periplasmic. Positions 387-401 (GTFAIAGMGALLAAS) form an intramembrane region, helical. The note=Loop between two helices intramembrane region spans 402-404 (VRA). Residues 405–416 (PLTGIVLVLEMT) constitute an intramembrane region (helical). An intramembrane region (note=Loop between two helices) is located at residues 417-421 (DNYQL). Residues 422 to 438 (ILPMIITCLGATLLAQF) traverse the membrane as a helical segment. Topologically, residues 439-472 (LGGKPLYSTILQRTLAKQEAEQAAKAQQAPRENT) are cytoplasmic. Tyrosine 445 lines the chloride pocket.

This sequence belongs to the chloride channel (TC 2.A.49) family. ClcA subfamily. In terms of assembly, homodimer.

The protein resides in the cell inner membrane. It catalyses the reaction 2 chloride(in) + H(+)(out) = 2 chloride(out) + H(+)(in). Functionally, proton-coupled chloride transporter. Functions as antiport system and exchanges two chloride ions for 1 proton. Probably acts as an electrical shunt for an outwardly-directed proton pump that is linked to amino acid decarboxylation, as part of the extreme acid resistance (XAR) response. The protein is H(+)/Cl(-) exchange transporter ClcA of Klebsiella pneumoniae (strain 342).